Consider the following 495-residue polypeptide: Aspartyl/glutamyl-tRNA(Asn/Gln) amidotransferase subunit B (495 aa).

It belongs to the GatB/GatE family. GatB subfamily. In terms of assembly, heterotrimer of A, B and C subunits.

It catalyses the reaction L-glutamyl-tRNA(Gln) + L-glutamine + ATP + H2O = L-glutaminyl-tRNA(Gln) + L-glutamate + ADP + phosphate + H(+). The enzyme catalyses L-aspartyl-tRNA(Asn) + L-glutamine + ATP + H2O = L-asparaginyl-tRNA(Asn) + L-glutamate + ADP + phosphate + 2 H(+). Functionally, allows the formation of correctly charged Asn-tRNA(Asn) or Gln-tRNA(Gln) through the transamidation of misacylated Asp-tRNA(Asn) or Glu-tRNA(Gln) in organisms which lack either or both of asparaginyl-tRNA or glutaminyl-tRNA synthetases. The reaction takes place in the presence of glutamine and ATP through an activated phospho-Asp-tRNA(Asn) or phospho-Glu-tRNA(Gln). The chain is Aspartyl/glutamyl-tRNA(Asn/Gln) amidotransferase subunit B from Rippkaea orientalis (strain PCC 8801 / RF-1) (Cyanothece sp. (strain PCC 8801)).